The primary structure comprises 436 residues: 3-ketoacyl-CoA thiolase (436 aa).

The active-site Acyl-thioester intermediate is Cys-99. Catalysis depends on proton acceptor residues His-392 and Cys-422.

It belongs to the thiolase-like superfamily. Thiolase family. As to quaternary structure, heterotetramer of two alpha chains (FadJ) and two beta chains (FadI).

It localises to the cytoplasm. The catalysed reaction is an acyl-CoA + acetyl-CoA = a 3-oxoacyl-CoA + CoA. Its pathway is lipid metabolism; fatty acid beta-oxidation. Catalyzes the final step of fatty acid oxidation in which acetyl-CoA is released and the CoA ester of a fatty acid two carbons shorter is formed. In Salmonella paratyphi B (strain ATCC BAA-1250 / SPB7), this protein is 3-ketoacyl-CoA thiolase.